Reading from the N-terminus, the 126-residue chain is MSLPQDLLYSKEHEWVKQEDGKLRIGITDFAQDELGDIVFVELPEIGEELKVDDPFGSVESVKTVSELYAPVSGKVVEINDDLEDSPEYVNESPYEKAWMIVIEPSDEKELEELLSAENYEAFIQD.

The region spanning 22-104 (KLRIGITDFA…YEKAWMIVIE (83 aa)) is the Lipoyl-binding domain. An N6-lipoyllysine modification is found at Lys63.

Belongs to the GcvH family. The glycine cleavage system is composed of four proteins: P, T, L and H. The cofactor is (R)-lipoate.

Its function is as follows. The glycine cleavage system catalyzes the degradation of glycine. The H protein shuttles the methylamine group of glycine from the P protein to the T protein. Is also involved in protein lipoylation via its role as an octanoyl/lipoyl carrier protein intermediate. The sequence is that of Glycine cleavage system H protein from Oceanobacillus iheyensis (strain DSM 14371 / CIP 107618 / JCM 11309 / KCTC 3954 / HTE831).